Reading from the N-terminus, the 688-residue chain is uncharacterized protein (688 aa).

This is an uncharacterized protein from Saccharomyces cerevisiae (strain ATCC 204508 / S288c) (Baker's yeast).